Consider the following 79-residue polypeptide: Large ribosomal subunit protein uL29 (79 aa).

It belongs to the universal ribosomal protein uL29 family.

The polypeptide is Large ribosomal subunit protein uL29 (Nocardia farcinica (strain IFM 10152)).